Here is a 261-residue protein sequence, read N- to C-terminus: Indole-3-glycerol phosphate synthase (261 aa).

This sequence belongs to the TrpC family.

It carries out the reaction 1-(2-carboxyphenylamino)-1-deoxy-D-ribulose 5-phosphate + H(+) = (1S,2R)-1-C-(indol-3-yl)glycerol 3-phosphate + CO2 + H2O. Its pathway is amino-acid biosynthesis; L-tryptophan biosynthesis; L-tryptophan from chorismate: step 4/5. This is Indole-3-glycerol phosphate synthase from Campylobacter curvus (strain 525.92).